The sequence spans 293 residues: MFSGSIVALVTPLDTDGEVDYTSLKNLVDYHINAGTDGIVAVGTTGESATLSVEEHVKLVMKTLEFSDGRIPVIAGTGANATHEAVTFSKLFRDSGVAGCLSVTPYYNKPTQEGLFLHYKAISESTDVPQILYNVPGRTAVDLLPETVARLAEFDNIVALKDATAELDRIAITRELCGDKFIQLSGDDATALEFVKMGGHGVISVTANVAAKDMATMFALAAQGKFEEAEIINQRLMPLHQDLFVEANPMPVKWATHRLGMITHPDIRLPLTELSHSAQPVVEQALIRAGVLK.

Pyruvate is bound at residue T45. The active-site Proton donor/acceptor is the Y133. Catalysis depends on K161, which acts as the Schiff-base intermediate with substrate. A pyruvate-binding site is contributed by I203.

Belongs to the DapA family. Homotetramer; dimer of dimers.

Its subcellular location is the cytoplasm. It catalyses the reaction L-aspartate 4-semialdehyde + pyruvate = (2S,4S)-4-hydroxy-2,3,4,5-tetrahydrodipicolinate + H2O + H(+). It functions in the pathway amino-acid biosynthesis; L-lysine biosynthesis via DAP pathway; (S)-tetrahydrodipicolinate from L-aspartate: step 3/4. Its function is as follows. Catalyzes the condensation of (S)-aspartate-beta-semialdehyde [(S)-ASA] and pyruvate to 4-hydroxy-tetrahydrodipicolinate (HTPA). The sequence is that of 4-hydroxy-tetrahydrodipicolinate synthase from Aliivibrio salmonicida (strain LFI1238) (Vibrio salmonicida (strain LFI1238)).